Here is a 753-residue protein sequence, read N- to C-terminus: Synaptotagmin-like protein 5 (753 aa).

Positions 7-123 constitute a RabBD domain; sequence FINLSFLLDH…IISGEWFLEE (117 aa). The FYVE-type zinc-finger motif lies at 64 to 106; the sequence is CVHCQKSLGLIFDRGAPCQACSLRVCSECRVTGLDGSWKCTVC. Disordered regions lie at residues 145–188, 221–283, and 298–359; these read RRSP…GFLL, SFKS…GFEN, and TKSH…LNSL. Residue serine 147 is modified to Phosphoserine. Positions 224–238 are enriched in low complexity; the sequence is SVSGSDRGSTTSSDL. Polar residues-rich tracts occupy residues 260 to 275 and 305 to 316; these read TQRSPAPSARSVTSIS and TSGTPSIAVSGT. C2 domains follow at residues 429 to 550 and 590 to 717; these read VTGE…DEWF and PQGK…VDWM.

In terms of assembly, binds RAB27A that has been activated by GTP-binding.

The protein resides in the membrane. May act as Rab effector protein and play a role in vesicle trafficking. Binds phospholipids. In Rattus norvegicus (Rat), this protein is Synaptotagmin-like protein 5 (Sytl5).